The sequence spans 395 residues: S-adenosylmethionine synthase (395 aa).

Position 16 (His-16) interacts with ATP. A Mg(2+)-binding site is contributed by Asp-18. Glu-44 lines the K(+) pocket. Residues Glu-57 and Gln-100 each coordinate L-methionine. The tract at residues 100 to 110 (QSPDIAQGVDR) is flexible loop. Residues 167-169 (DAK), 233-234 (RF), Asp-242, 248-249 (RK), Ala-265, and Lys-269 each bind ATP. Residue Asp-242 participates in L-methionine binding. An L-methionine-binding site is contributed by Lys-273.

This sequence belongs to the AdoMet synthase family. Homotetramer; dimer of dimers. Mg(2+) serves as cofactor. Requires K(+) as cofactor.

The protein localises to the cytoplasm. The catalysed reaction is L-methionine + ATP + H2O = S-adenosyl-L-methionine + phosphate + diphosphate. The protein operates within amino-acid biosynthesis; S-adenosyl-L-methionine biosynthesis; S-adenosyl-L-methionine from L-methionine: step 1/1. In terms of biological role, catalyzes the formation of S-adenosylmethionine (AdoMet) from methionine and ATP. The overall synthetic reaction is composed of two sequential steps, AdoMet formation and the subsequent tripolyphosphate hydrolysis which occurs prior to release of AdoMet from the enzyme. This is S-adenosylmethionine synthase from Burkholderia mallei (strain NCTC 10247).